Consider the following 286-residue polypeptide: Protein MGF 360-3L (286 aa).

Residues 1-17 (MKVLLELLLGYSVLILA) form a helical membrane-spanning segment. The N-linked (GlcNAc...) asparagine; by host glycan is linked to N61. The next 2 membrane-spanning stretches (helical) occupy residues 128–148 (HCCFYLVFSIAFVGYIVFVYN) and 153–173 (LNTTMKLLALLSILIWLSQPA). N-linked (GlcNAc...) asparagine; by host glycans are attached at residues N238 and N263.

This sequence belongs to the asfivirus MGF 110 family.

It localises to the host membrane. Its function is as follows. Plays a role in virus cell tropism, and may be required for efficient virus replication in macrophages. This chain is Protein MGF 360-3L, found in African swine fever virus (isolate Tick/Malawi/Lil 20-1/1983) (ASFV).